The chain runs to 150 residues: 3-hydroxyacyl-[acyl-carrier-protein] dehydratase FabZ (150 aa).

Histidine 54 is an active-site residue.

It belongs to the thioester dehydratase family. FabZ subfamily.

It localises to the cytoplasm. It catalyses the reaction a (3R)-hydroxyacyl-[ACP] = a (2E)-enoyl-[ACP] + H2O. Its function is as follows. Involved in unsaturated fatty acids biosynthesis. Catalyzes the dehydration of short chain beta-hydroxyacyl-ACPs and long chain saturated and unsaturated beta-hydroxyacyl-ACPs. The protein is 3-hydroxyacyl-[acyl-carrier-protein] dehydratase FabZ of Vibrio campbellii (strain ATCC BAA-1116).